Consider the following 235-residue polypeptide: Thiamine import ATP-binding protein ThiQ (235 aa).

The region spanning leucine 2–isoleucine 230 is the ABC transporter domain. ATP is bound at residue glycine 32–serine 39.

It belongs to the ABC transporter superfamily. Thiamine importer (TC 3.A.1.19.1) family. In terms of assembly, the complex is composed of two ATP-binding proteins (ThiQ), two transmembrane proteins (ThiP) and a solute-binding protein (ThiB).

It localises to the cell inner membrane. It catalyses the reaction thiamine(out) + ATP + H2O = thiamine(in) + ADP + phosphate + H(+). In terms of biological role, part of the ABC transporter complex ThiBPQ involved in thiamine import. Responsible for energy coupling to the transport system. The sequence is that of Thiamine import ATP-binding protein ThiQ from Salmonella choleraesuis (strain SC-B67).